The chain runs to 85 residues: Large ribosomal subunit protein bL27 (85 aa).

The segment at Met-1–Leu-21 is disordered.

Belongs to the bacterial ribosomal protein bL27 family.

This chain is Large ribosomal subunit protein bL27, found in Geobacter sp. (strain M21).